Reading from the N-terminus, the 246-residue chain is Transcription factor A, mitochondrial (246 aa).

A mitochondrion-targeting transit peptide spans 1-42 (MALLRGVWGVLNALGKSGADLCAGCGSRLRYPFSFAYVPKWF). The segment at residues 50 to 118 (PKKPMTSYVR…VYKEEINRIQ (69 aa)) is a DNA-binding region (HMG box 1). S56 and S61 each carry phosphoserine; by PKA. At T122 the chain carries Phosphothreonine. The HMG box 2 DNA-binding region spans 155–219 (PKRPRSAYNI…RYYNEMKSWE (65 aa)). S160 bears the Phosphoserine; by PKA mark. Residues S193 and S195 each carry the phosphoserine modification.

Monomer; binds DNA as a monomer. Homodimer. Component of the mitochondrial transcription initiation complex, composed at least of TFB2M, TFAM and POLRMT. In this complex TFAM recruits POLRMT to the promoter whereas TFB2M induces structural changes in POLRMT to enable promoter opening and trapping of the DNA non-template strand. Upon metabolic stress, forms a complex composed of FOXO3, SIRT3, TFAM and POLRMT. Interacts with TFB1M and TFB2M. Interacts with CLPX; this enhances DNA-binding. In terms of processing, phosphorylation by PKA within the HMG box 1 impairs DNA binding and promotes degradation by the AAA+ Lon protease.

It localises to the mitochondrion. It is found in the mitochondrion matrix. The protein resides in the mitochondrion nucleoid. Functionally, binds to the mitochondrial light strand promoter and functions in mitochondrial transcription regulation. Component of the mitochondrial transcription initiation complex, composed at least of TFB2M, TFAM and POLRMT that is required for basal transcription of mitochondrial DNA. In this complex, TFAM recruits POLRMT to a specific promoter whereas TFB2M induces structural changes in POLRMT to enable promoter opening and trapping of the DNA non-template strand. Required for accurate and efficient promoter recognition by the mitochondrial RNA polymerase. Promotes transcription initiation from the HSP1 and the light strand promoter by binding immediately upstream of transcriptional start sites. Is able to unwind DNA. Bends the mitochondrial light strand promoter DNA into a U-turn shape via its HMG boxes. Required for maintenance of normal levels of mitochondrial DNA. May play a role in organizing and compacting mitochondrial DNA. This Bos taurus (Bovine) protein is Transcription factor A, mitochondrial.